The sequence spans 569 residues: MLVNPATKYRPAATVDIPDRTWPGRTITRAPRWMSTDLRDGNQALIEPMNPARKLRLFEQLVKIGLKEIEVAFPAASQTDFDFVRMLIEERRIPDDVTIVVLTQSREDLIRRTVESVRGAARATVHLYNPIAPAWRRIVFNASRDEIKAVAVSGTRLIKALTDAMPETAWTYEYSPETFSLAELDFSLEVSDAVSAAWQAGPGRPMILNLPTTVECSTPNVFADQIEWMHRRLARRAHIVLSVHPHNDRGTAVAAAELALMAGADRVEGCLFGNGERTGNVDLVTLALNLYTQGVAPELDFSDIDAVRQCVEHCNQLPVHPRHPYVGDLVFTAFSGSHQDAIRKGFAQQQPDAIWEVPYLPIDPADLGRSYDAVIRVNSQSGKGGMAYLLEQVHGLYLPRRLQIEFSRAVQAMTDDTGLEASADDLYGLFRREYLARETPLRYVSHQLASDATGATAITVQMERDGQPCTVRGTGNGPIDAFIDALDLPVRVMDYHEHAMTAGADARAACYVEVRVGDSPTGFGAGIDASLVTASLRAVVSGVNRHLQAGFGARAQATQTASASAATEA.

The Pyruvate carboxyltransferase domain maps to 31–305; that stretch reads PRWMSTDLRD…APELDFSDID (275 aa). Residues D40, H244, H246, and N280 each coordinate Mg(2+). The regulatory domain stretch occupies residues 437 to 569; the sequence is RETPLRYVSH…TASASAATEA (133 aa).

This sequence belongs to the alpha-IPM synthase/homocitrate synthase family. LeuA type 2 subfamily. In terms of assembly, homodimer. Mg(2+) is required as a cofactor.

It is found in the cytoplasm. It carries out the reaction 3-methyl-2-oxobutanoate + acetyl-CoA + H2O = (2S)-2-isopropylmalate + CoA + H(+). The protein operates within amino-acid biosynthesis; L-leucine biosynthesis; L-leucine from 3-methyl-2-oxobutanoate: step 1/4. Functionally, catalyzes the condensation of the acetyl group of acetyl-CoA with 3-methyl-2-oxobutanoate (2-ketoisovalerate) to form 3-carboxy-3-hydroxy-4-methylpentanoate (2-isopropylmalate). In Cupriavidus taiwanensis (strain DSM 17343 / BCRC 17206 / CCUG 44338 / CIP 107171 / LMG 19424 / R1) (Ralstonia taiwanensis (strain LMG 19424)), this protein is 2-isopropylmalate synthase.